Reading from the N-terminus, the 303-residue chain is UDP-3-O-acyl-N-acetylglucosamine deacetylase (303 aa).

Zn(2+) contacts are provided by His-78, His-237, and Asp-241. His-264 functions as the Proton donor in the catalytic mechanism.

Belongs to the LpxC family. Zn(2+) serves as cofactor.

It carries out the reaction a UDP-3-O-[(3R)-3-hydroxyacyl]-N-acetyl-alpha-D-glucosamine + H2O = a UDP-3-O-[(3R)-3-hydroxyacyl]-alpha-D-glucosamine + acetate. Its pathway is glycolipid biosynthesis; lipid IV(A) biosynthesis; lipid IV(A) from (3R)-3-hydroxytetradecanoyl-[acyl-carrier-protein] and UDP-N-acetyl-alpha-D-glucosamine: step 2/6. Its function is as follows. Catalyzes the hydrolysis of UDP-3-O-myristoyl-N-acetylglucosamine to form UDP-3-O-myristoylglucosamine and acetate, the committed step in lipid A biosynthesis. The polypeptide is UDP-3-O-acyl-N-acetylglucosamine deacetylase (Pseudomonas putida (strain ATCC 700007 / DSM 6899 / JCM 31910 / BCRC 17059 / LMG 24140 / F1)).